Here is a 791-residue protein sequence, read N- to C-terminus: ATP-dependent 6-phosphofructokinase, platelet type (791 aa).

An N-acetylmethionine modification is found at M1. The interval 1 to 399 (MDNKVSASPR…NLNTYKRLAI (399 aa)) is N-terminal catalytic PFK domain 1. A Phosphoserine modification is found at S6. Position 12 is a phosphoserine; by PKA (S12). Phosphoserine is present on S21. ATP-binding positions include G34, 97 to 98 (RS), and 127 to 130 (GSGS). S142 carries the phosphoserine modification. Substrate contacts are provided by residues 173–175 (SID), R210, 217–219 (MGR), E273, R301, and 307–310 (HVQR). D175 serves as the catalytic Proton acceptor. S386 is modified (phosphoserine). The residue at position 395 (K395) is an N6-acetyllysine. Positions 400–411 (KLPDDKIQKSNC) are interdomain linker. Residues 412–791 (NVAVINVGAP…RGGPEEPAAI (380 aa)) are C-terminal regulatory PFK domain 2. R481 serves as a coordination point for beta-D-fructose 2,6-bisphosphate. K486 is subject to N6-acetyllysine. Beta-D-fructose 2,6-bisphosphate contacts are provided by residues 538 to 542 (TVSNN), R576, 583 to 585 (MGG), and E639. O-linked (GlcNAc) serine glycosylation occurs at S540. A Phosphotyrosine modification is found at Y651. Residues R665 and 671–674 (HMQQ) each bind beta-D-fructose 2,6-bisphosphate. Position 688 is an N6-acetyllysine (K688). Residue R744 coordinates beta-D-fructose 2,6-bisphosphate.

It belongs to the phosphofructokinase type A (PFKA) family. ATP-dependent PFK group I subfamily. Eukaryotic two domain clade 'E' sub-subfamily. Homo- and heterotetramers. Phosphofructokinase (PFK) enzyme functions as a tetramer composed of different combinations of 3 types of subunits, called PFKM (M), PFKL (L) and PFKP (P). The composition of the PFK tetramer differs according to the tissue type it is present in. The kinetic and regulatory properties of the tetrameric enzyme are dependent on the subunit composition, hence can vary across tissues. Interacts with ATG4B; promoting phosphorylation of ATG4B. It depends on Mg(2+) as a cofactor. GlcNAcylation decreases enzyme activity. In terms of processing, phosphorylation at Ser-386 promotes interaction with ATG4B.

It localises to the cytoplasm. The catalysed reaction is beta-D-fructose 6-phosphate + ATP = beta-D-fructose 1,6-bisphosphate + ADP + H(+). The protein operates within carbohydrate degradation; glycolysis; D-glyceraldehyde 3-phosphate and glycerone phosphate from D-glucose: step 3/4. Allosterically activated by ADP, AMP, or fructose 2,6-bisphosphate, and allosterically inhibited by ATP or citrate. In terms of biological role, catalyzes the phosphorylation of D-fructose 6-phosphate to fructose 1,6-bisphosphate by ATP, the first committing step of glycolysis. The protein is ATP-dependent 6-phosphofructokinase, platelet type (PFKP) of Oryctolagus cuniculus (Rabbit).